Consider the following 483-residue polypeptide: Dual specificity protein phosphatase 10 (483 aa).

Residues 169 to 286 enclose the Rhodanese domain; the sequence is PSQGPVIIDC…FKQNHGNLCD (118 aa). The tract at residues 200–216 is interaction with MAP kinases; that stretch reads KISRRRLQQGKITVLDL. Residues 322 to 465 enclose the Tyrosine-protein phosphatase domain; that stretch reads ELTPILPFLF…LLEFEEDLNN (144 aa). Catalysis depends on Cys409, which acts as the Phosphocysteine intermediate.

It belongs to the protein-tyrosine phosphatase family. Non-receptor class dual specificity subfamily. In terms of assembly, monomer. Interacts with MAPK14.

The protein resides in the cytoplasm. It is found in the nucleus. It carries out the reaction O-phospho-L-tyrosyl-[protein] + H2O = L-tyrosyl-[protein] + phosphate. The enzyme catalyses O-phospho-L-seryl-[protein] + H2O = L-seryl-[protein] + phosphate. It catalyses the reaction O-phospho-L-threonyl-[protein] + H2O = L-threonyl-[protein] + phosphate. Protein phosphatase involved in the inactivation of MAP kinases. Has a specificity for the MAPK11/MAPK12/MAPK13/MAPK14 subfamily. It preferably dephosphorylates p38. The chain is Dual specificity protein phosphatase 10 (Dusp10) from Mus musculus (Mouse).